A 109-amino-acid chain; its full sequence is Putative double-stranded DNA mimic protein YciU (109 aa).

This sequence belongs to the putative dsDNA mimic protein family.

Functionally, may act as a double-stranded DNA (dsDNA) mimic. Probably regulates the activity of a dsDNA-binding protein. This is Putative double-stranded DNA mimic protein YciU from Shigella flexneri.